The primary structure comprises 335 residues: Serpentine receptor class alpha-13 (335 aa).

The Extracellular portion of the chain corresponds to 1-25; the sequence is MAIISSVNRTCASESLLELYRSYKY. The helical transmembrane segment at 26–46 threads the bilayer; the sequence is ILSTSFNIIIPIISLFFLVYA. Residues 47 to 61 are Cytoplasmic-facing; it reads IKQLCAQSIIQYSTR. Residues 62-82 form a helical membrane-spanning segment; that stretch reads VLLITTILFAVCHQIAYFCFK. Topologically, residues 83–108 are extracellular; that stretch reads ADLLYTMLFKLDQPCNLQHSSYDCRF. Residues 109 to 129 traverse the membrane as a helical segment; that stretch reads ITIATTTSNCGMALVQLAMSI. Residues 130–146 lie on the Cytoplasmic side of the membrane; the sequence is DRVFALKFNRVYYKLKS. The helical transmembrane segment at 147–167 threads the bilayer; that stretch reads IPGITLALITLSISFSMFFIL. Residues 168-192 lie on the Extracellular side of the membrane; the sequence is TIDDPLSGYVNHCGFYPTYSQDKFH. The chain crosses the membrane as a helical span at residues 193–213; it reads IFLDVTLYLAVFNFVFDIGLM. At 214–243 the chain is on the cytoplasmic side; the sequence is YYSYQEILWKRSYSFVNRFQSRISLKCTQA. The helical transmembrane segment at 244–264 threads the bilayer; it reads IFIISICQCISNVLYSGLLSL. Residues 265 to 278 are Extracellular-facing; it reads LMKLGRYMSSADYN. The chain crosses the membrane as a helical span at residues 279–299; it reads LSLSLAYTTPYSCLILPILIC. Topologically, residues 300-335 are cytoplasmic; that stretch reads KVLEYIKKQRTVGILSLRNQKQSMEGHMAMINSAWK.

The protein belongs to the nematode receptor-like protein sra family. In terms of tissue distribution, expressed in the AWA and AWC chemosensory neurons.

It is found in the membrane. Its function is as follows. Chemosensory receptor that negatively regulates RAS/MAPK signaling during vulva induction and the negative regulation of olfaction of volitile attractants. Required for the suppression of vulval induction in response to food starvation. Signaling acts through the GPA-5 G-alpha protein subunit. The chain is Serpentine receptor class alpha-13 (sra-13) from Caenorhabditis elegans.